Reading from the N-terminus, the 374-residue chain is Dihydrolipoyllysine-residue acetyltransferase component of acetoin cleaving system (374 aa).

A Lipoyl-binding domain is found at 9–84 (IIPIVMPKWG…PVKALLGVLA (76 aa)). Lys50 carries the post-translational modification N6-lipoyllysine. The AB hydrolase-1 domain maps to 137–360 (TVLFIHGFGG…DAGHMSQMEK (224 aa)).

The cofactor is (R)-lipoate.

It carries out the reaction N(6)-[(R)-dihydrolipoyl]-L-lysyl-[protein] + acetyl-CoA = N(6)-[(R)-S(8)-acetyldihydrolipoyl]-L-lysyl-[protein] + CoA. It functions in the pathway ketone degradation; acetoin degradation. Functionally, dihydrolipoamide acetyltransferase involved in acetoin catabolism. The sequence is that of Dihydrolipoyllysine-residue acetyltransferase component of acetoin cleaving system (acoC) from Cupriavidus necator (strain ATCC 17699 / DSM 428 / KCTC 22496 / NCIMB 10442 / H16 / Stanier 337) (Ralstonia eutropha).